The following is a 158-amino-acid chain: Transcription elongation factor GreA (158 aa).

This sequence belongs to the GreA/GreB family.

Its function is as follows. Necessary for efficient RNA polymerase transcription elongation past template-encoded arresting sites. The arresting sites in DNA have the property of trapping a certain fraction of elongating RNA polymerases that pass through, resulting in locked ternary complexes. Cleavage of the nascent transcript by cleavage factors such as GreA or GreB allows the resumption of elongation from the new 3'terminus. GreA releases sequences of 2 to 3 nucleotides. This chain is Transcription elongation factor GreA, found in Allorhizobium ampelinum (strain ATCC BAA-846 / DSM 112012 / S4) (Agrobacterium vitis (strain S4)).